We begin with the raw amino-acid sequence, 879 residues long: MLRCWSVTVERSCEGMLLRRRILSLSASSFRNFTSGNNGDAIPFSTFTKPSSSIAPGDFLVREWKDWFKHRDVKQSHQLIDRIFDILRAPSNDGDDRAFYLHLSNLRLRLTEKFVLDVLSHTRYDILCCLKFFDWAARQPGFHHTRATFHAIFKILRGAKLVTLMIDFLDRSVGFESCRHSLRLCDALVVGYAVAGRTDIALQHFGNMRFRGLDLDSFGYHVLLNALVEEKCFDSFDVIFDQISVRGFVCAVTHSILVKKFCKQGKLDEAEDYLRALLPNDPAGCGSGLGILVDALCSKRKFQEATKLLDEIKLVGTVNMDRAYNIWIRALIKAGFLNNPADFLQKISPLEGCELEVFRYNSMVFQLLKENNLDGVYDILTEMMVRGVSPNKKTMNAALCFFCKAGFVDEALELYRSRSEIGFAPTAMSYNYLIHTLCANESVEQAYDVLKGAIDRGHFLGGKTFSTLTNALCWKGKPDMARELVIAAAERDLLPKRIAGCKIISALCDVGKVEDALMINELFNKSGVDTSFKMFTSLIYGSITLMRGDIAAKLIIRMQEKGYTPTRSLYRNVIQCVCEMESGEKNFFTTLLKFQLSLWEHKVQAYNLFIEGAGFAGKPKLARLVYDMMDRDGITPTVASNILMLQSYLKNEKIADALHFFHDLREQGKTKKRLYQVMIVGLCKANKLDDAMHFLEEMKGEGLQPSIECYEVNIQKLCNEEKYDEAVGLVNEFRKSGRRITAFIGNVLLHNAMKSKGVYEAWTRMRNIEDKIPEMKSLGELIGLFSGRIDMEVELKRLDEVIEKCYPLDMYTYNMLLRMIVMNQAEDAYEMVERIARRGYVPNERTDMILERANRILEERNSRSNLGRNGWNSRQRQLE.

The transit peptide at Met1 to Phe44 directs the protein to the mitochondrion. 16 PPR repeats span residues Ser181–Leu215, Asp216–Arg246, Cys250–Asn280, Cys285–Asn319, Met320–Leu355, Glu356–Pro390, Asn391–Pro425, Thr426–Leu460, Gly461–Pro495, Lys496–Thr530, Ser531–Pro565, Thr566–Ser597, Lys602–Pro636, Thr637–Gln667, Lys671–Pro705, and Ser706–Ile740.

It belongs to the PPR family. P subfamily.

Its subcellular location is the mitochondrion. This chain is Pentatricopeptide repeat-containing protein At1g71210, mitochondrial, found in Arabidopsis thaliana (Mouse-ear cress).